Reading from the N-terminus, the 268-residue chain is 4-hydroxy-tetrahydrodipicolinate reductase (268 aa).

Residue 8-13 (GAAGRM) participates in NAD(+) binding. Residue R36 participates in NADP(+) binding. NAD(+) contacts are provided by residues 99-101 (GTT) and 123-126 (AANF). Residue H156 is the Proton donor/acceptor of the active site. A (S)-2,3,4,5-tetrahydrodipicolinate-binding site is contributed by H157. Catalysis depends on K160, which acts as the Proton donor. 166 to 167 (GT) contacts (S)-2,3,4,5-tetrahydrodipicolinate.

This sequence belongs to the DapB family.

It is found in the cytoplasm. The enzyme catalyses (S)-2,3,4,5-tetrahydrodipicolinate + NAD(+) + H2O = (2S,4S)-4-hydroxy-2,3,4,5-tetrahydrodipicolinate + NADH + H(+). The catalysed reaction is (S)-2,3,4,5-tetrahydrodipicolinate + NADP(+) + H2O = (2S,4S)-4-hydroxy-2,3,4,5-tetrahydrodipicolinate + NADPH + H(+). It functions in the pathway amino-acid biosynthesis; L-lysine biosynthesis via DAP pathway; (S)-tetrahydrodipicolinate from L-aspartate: step 4/4. Catalyzes the conversion of 4-hydroxy-tetrahydrodipicolinate (HTPA) to tetrahydrodipicolinate. The sequence is that of 4-hydroxy-tetrahydrodipicolinate reductase from Pseudomonas fluorescens (strain ATCC BAA-477 / NRRL B-23932 / Pf-5).